Reading from the N-terminus, the 476-residue chain is Beta-amyrin 28-monooxygenase (476 aa).

A helical transmembrane segment spans residues 2–22; sequence ELLYVCLVCVFVFLVSLLLLY. Residue Cys-421 participates in heme binding.

This sequence belongs to the cytochrome P450 family. Heme is required as a cofactor. As to expression, specifically expressed in roots.

The protein resides in the membrane. The catalysed reaction is beta-amyrin + 3 reduced [NADPH--hemoprotein reductase] + 3 O2 = oleanolate + 3 oxidized [NADPH--hemoprotein reductase] + 4 H2O + 4 H(+). In terms of biological role, catalyzes the carboxylation of beta-amyrin at the C-28 position to form oleanolate. Catalyzes the carboxylation of alpha-amyrin at the C-28 position to form ursolate. In Solanum lycopersicum (Tomato), this protein is Beta-amyrin 28-monooxygenase (CYP716A44).